Reading from the N-terminus, the 161-residue chain is Large ribosomal subunit protein uL11 (161 aa).

The protein belongs to the universal ribosomal protein uL11 family. As to quaternary structure, part of the ribosomal stalk of the 50S ribosomal subunit. Interacts with L10 and the large rRNA to form the base of the stalk. L10 forms an elongated spine to which L12 dimers bind in a sequential fashion forming a multimeric L10(L12)X complex.

Its function is as follows. Forms part of the ribosomal stalk which helps the ribosome interact with GTP-bound translation factors. The polypeptide is Large ribosomal subunit protein uL11 (Methanocaldococcus jannaschii (strain ATCC 43067 / DSM 2661 / JAL-1 / JCM 10045 / NBRC 100440) (Methanococcus jannaschii)).